A 525-amino-acid chain; its full sequence is Vesicular inhibitory amino acid transporter (525 aa).

The Cytoplasmic portion of the chain corresponds to 1–132; it reads MATLLRSKLT…WNVTNAIQGM (132 aa). The chain crosses the membrane as a helical span at residues 133-153; sequence FVLGLPYAILHGGYLGLFLII. The Lumenal, vesicle portion of the chain corresponds to 154 to 204; sequence FAAVVCCYTGKILIACLYEENEDGEVVRVRDSYVAIANACCAPRFPTLGGR. At Tyr186 the chain carries 3'-nitrotyrosine. The helical transmembrane segment at 205 to 225 threads the bilayer; sequence VVNVAQIIELVMTCILYVVVS. Topologically, residues 226–265 are cytoplasmic; sequence GNLMYNSFPGLPVSQKSWSIIATAVLLPCAFLKNLKAVSK. Residues 266–286 traverse the membrane as a helical segment; that stretch reads FSLLCTLAHFVINILVIAYCL. Residues 287–305 are Lumenal, vesicle-facing; it reads SRARDWAWEKVKFYIDVKK. The chain crosses the membrane as a helical span at residues 306 to 326; sequence FPISIGIIVFSYTSQIFLPSL. The Cytoplasmic portion of the chain corresponds to 327-341; sequence EGNMQQPSEFHCMMN. A helical transmembrane segment spans residues 342–362; the sequence is WTHIAACVLKGLFALVAYLTW. Residues 363–383 lie on the Lumenal, vesicle side of the membrane; it reads ADETKEVITDNLPGSIRAVVN. Residues 384 to 404 traverse the membrane as a helical segment; the sequence is IFLVAKALLSYPLPFFAAVEV. Topologically, residues 405 to 438 are cytoplasmic; the sequence is LEKSLFQEGSRAFFPACYGGDGRLKSWGLTLRCA. Residues 439–459 form a helical membrane-spanning segment; sequence LVVFTLLMAIYVPHFALLMGL. Topologically, residues 460–461 are lumenal, vesicle; that stretch reads TG. Residues 462–482 form a helical membrane-spanning segment; it reads SLTGAGLCFLLPSLFHLRLLW. Residues 483-489 lie on the Cytoplasmic side of the membrane; it reads RKLLWHQ. The chain crosses the membrane as a helical span at residues 490-510; sequence VFFDVAIFVIGGICSVSGFVH. Over 511 to 525 the chain is Lumenal, vesicle; the sequence is SLEGLIEAYRTNAED.

This sequence belongs to the amino acid/polyamine transporter 2 family. In terms of tissue distribution, brain. Expressed at high levels within the neocortex, hippocampus, cerebellum, striatum, septal nuclei and the reticular nucleus of the thalamus. Also expressed in islets where it is more abundant in the peripheral/mantle region. Highly expressed in the nerve endings of GABA neurons in the brain and spinal cord but also in glycinergic nerve endings. Expressed in glycine-, GABA- or GABA- and glycine-containing boutons.

Its subcellular location is the cytoplasmic vesicle. The protein localises to the secretory vesicle. The protein resides in the synaptic vesicle membrane. It localises to the presynapse. It carries out the reaction beta-alanine(out) + n H(+)(in) = beta-alanine(in) + n H(+)(out). The catalysed reaction is 4-aminobutanoate(out) + n H(+)(in) = 4-aminobutanoate(in) + n H(+)(out). The enzyme catalyses glycine(out) + n H(+)(in) = glycine(in) + n H(+)(out). Functionally, antiporter that exchanges vesicular protons for cytosolic 4-aminobutanoate or to a lesser extend glycine, thus allowing their secretion from nerve terminals. The transport is equally dependent on the chemical and electrical components of the proton gradient. May also transport beta-alanine. Acidification of GABAergic synaptic vesicles is a prerequisite for 4-aminobutanoate uptake. This chain is Vesicular inhibitory amino acid transporter, found in Rattus norvegicus (Rat).